We begin with the raw amino-acid sequence, 304 residues long: MQKFDIKTFQGLILSLQDYWARQGCVISQPLDMEVGAGTSHPMTFLRSIGPEPMNCAYVQPSRRPTDGRYGENPNRLQHYYQFQVILKPSPDNIQELYLGSLRELGFDPLVHDIRFVEDNWENPTLGAWGLGWEVWLNGMEVTQFTYFQQVGGLECFPVTGEITYGLERLAMYIQGVDSLYDLVWADGPLGKVTYRDVFHQNEVEQSTYNFEHADVPFLFQLFDQCEKECQHLLNLELPLPLPAYERILKAAHAFNLLDARHAISVTERQRYILRIRTLSKAVAEAYYAARERLGFPMCKATQA.

It belongs to the class-II aminoacyl-tRNA synthetase family. In terms of assembly, tetramer of two alpha and two beta subunits.

It is found in the cytoplasm. The catalysed reaction is tRNA(Gly) + glycine + ATP = glycyl-tRNA(Gly) + AMP + diphosphate. The sequence is that of Glycine--tRNA ligase alpha subunit from Tolumonas auensis (strain DSM 9187 / NBRC 110442 / TA 4).